Reading from the N-terminus, the 422-residue chain is Tyrosine--tRNA ligase (422 aa).

Tyr-34 is a binding site for L-tyrosine. Residues 39-48 (PTEDSLHVGH) carry the 'HIGH' region motif. Tyr-172 and Gln-176 together coordinate L-tyrosine. The 'KMSKS' region motif lies at 232 to 236 (KFGKT). Lys-235 is a binding site for ATP. Positions 354 to 412 (KDLQEALVLSSLAQSRTQAKNMIISNSISINTKKIVNKNYIIDDNDKLFNQFTLLSRGK) constitute an S4 RNA-binding domain.

The protein belongs to the class-I aminoacyl-tRNA synthetase family. TyrS type 1 subfamily. In terms of assembly, homodimer.

The protein resides in the cytoplasm. It catalyses the reaction tRNA(Tyr) + L-tyrosine + ATP = L-tyrosyl-tRNA(Tyr) + AMP + diphosphate + H(+). Its function is as follows. Catalyzes the attachment of tyrosine to tRNA(Tyr) in a two-step reaction: tyrosine is first activated by ATP to form Tyr-AMP and then transferred to the acceptor end of tRNA(Tyr). The sequence is that of Tyrosine--tRNA ligase from Buchnera aphidicola subsp. Schizaphis graminum (strain Sg).